Here is a 226-residue protein sequence, read N- to C-terminus: Holliday junction branch migration complex subunit RuvA (226 aa).

The domain I stretch occupies residues 1–67 (MITSVYAKIE…AINKELYAFK (67 aa)). Residues 68-145 (SLKEKEWFKA…YLKNQIVVSD (78 aa)) are domain II. Residues 146–167 (KVEPQIDDDEKIDDSKDLNDDE) are flexible linker. The tract at residues 168-226 (LLSEIVIEAIDCLISLGYKQEQIKTALAEIDLKNESINDSADLVAVIIKQIGLRTSEVS) is domain III.

This sequence belongs to the RuvA family. In terms of assembly, homotetramer. Forms an RuvA(8)-RuvB(12)-Holliday junction (HJ) complex. HJ DNA is sandwiched between 2 RuvA tetramers; dsDNA enters through RuvA and exits via RuvB. An RuvB hexamer assembles on each DNA strand where it exits the tetramer. Each RuvB hexamer is contacted by two RuvA subunits (via domain III) on 2 adjacent RuvB subunits; this complex drives branch migration. In the full resolvosome a probable DNA-RuvA(4)-RuvB(12)-RuvC(2) complex forms which resolves the HJ.

It is found in the cytoplasm. Functionally, the RuvA-RuvB-RuvC complex processes Holliday junction (HJ) DNA during genetic recombination and DNA repair, while the RuvA-RuvB complex plays an important role in the rescue of blocked DNA replication forks via replication fork reversal (RFR). RuvA specifically binds to HJ cruciform DNA, conferring on it an open structure. The RuvB hexamer acts as an ATP-dependent pump, pulling dsDNA into and through the RuvAB complex. HJ branch migration allows RuvC to scan DNA until it finds its consensus sequence, where it cleaves and resolves the cruciform DNA. The polypeptide is Holliday junction branch migration complex subunit RuvA (Mycoplasmoides gallisepticum (strain R(low / passage 15 / clone 2)) (Mycoplasma gallisepticum)).